A 365-amino-acid polypeptide reads, in one-letter code: tRNA(Met) cytidine acetate ligase (365 aa).

Residues 7–20 (IAEF…HKYL), Gly96, Asn152, and Arg175 each bind ATP.

It belongs to the TmcAL family.

It is found in the cytoplasm. The enzyme catalyses cytidine(34) in elongator tRNA(Met) + acetate + ATP = N(4)-acetylcytidine(34) in elongator tRNA(Met) + AMP + diphosphate. Catalyzes the formation of N(4)-acetylcytidine (ac(4)C) at the wobble position of elongator tRNA(Met), using acetate and ATP as substrates. First activates an acetate ion to form acetyladenylate (Ac-AMP) and then transfers the acetyl group to tRNA to form ac(4)C34. This Streptococcus pneumoniae (strain P1031) protein is tRNA(Met) cytidine acetate ligase.